A 126-amino-acid polypeptide reads, in one-letter code: Small ribosomal subunit protein uS11 (126 aa).

Belongs to the universal ribosomal protein uS11 family. Part of the 30S ribosomal subunit. Interacts with proteins S7 and S18. Binds to IF-3.

In terms of biological role, located on the platform of the 30S subunit, it bridges several disparate RNA helices of the 16S rRNA. Forms part of the Shine-Dalgarno cleft in the 70S ribosome. This is Small ribosomal subunit protein uS11 from Ehrlichia chaffeensis (strain ATCC CRL-10679 / Arkansas).